The primary structure comprises 366 residues: Polyprenyl transferase ausN (366 aa).

8 helical membrane passes run 97–117 (VVGI…DLLL), 121–141 (LLLT…NDLI), 164–184 (LPTA…LFLF), 215–235 (LILV…GVEP), 239–259 (ILSS…IDLV), 287–307 (LAYS…LLGG), 308–328 (LRAP…WTFL), and 346–366 (SCLM…AVRV).

This sequence belongs to the UbiA prenyltransferase family. The cofactor is Mg(2+).

Its subcellular location is the membrane. It catalyses the reaction 3,5-dimethylorsellinate + (2E,6E)-farnesyl diphosphate = (3R)-3-farnesyl-6-hydroxy-2,3,5-trimethyl-4-oxocyclohexa-1,5-diene-1-carboxylate + diphosphate + H(+). Its pathway is secondary metabolite biosynthesis; terpenoid biosynthesis. Polyprenyl transferase; part of the gene cluster that mediates the biosynthesis of calidodehydroaustin, a fungal meroterpenoid. The first step of the pathway is the synthesis of 3,5-dimethylorsellinic acid by the polyketide synthase ausA. 3,5-dimethylorsellinic acid is then prenylated by the polyprenyl transferase ausN. Further epoxidation by the FAD-dependent monooxygenase ausM and cyclization by the probable terpene cyclase ausL lead to the formation of protoaustinoid A. Protoaustinoid A is then oxidized to spiro-lactone preaustinoid A3 by the combined action of the FAD-binding monooxygenases ausB and ausC, and the dioxygenase ausE. Acid-catalyzed keto-rearrangement and ring contraction of the tetraketide portion of preaustinoid A3 by ausJ lead to the formation of preaustinoid A4. The aldo-keto reductase ausK, with the help of ausH, is involved in the next step by transforming preaustinoid A4 into isoaustinone which is in turn hydroxylated by the P450 monooxygenase ausI to form austinolide. The cytochrome P450 monooxygenase ausG modifies austinolide to austinol. Austinol is further acetylated to austin by the O-acetyltransferase ausP, which spontaneously changes to dehydroaustin. The cytochrome P450 monooxygenase ausR then converts dehydroaustin is into 7-dehydrodehydroaustin. The hydroxylation catalyzed by ausR permits the O-acetyltransferase ausQ to add an additional acetyl group to the molecule, leading to the formation of acetoxydehydroaustin. The short chain dehydrogenase ausT catalyzes the reduction of the double bond present between carbon atoms 1 and 2 to convert 7-dehydrodehydroaustin into 1,2-dihydro-7-hydroxydehydroaustin. AusQ catalyzes not only an acetylation reaction but also the addition of the PKS ausV diketide product to 1,2-dihydro-7-hydroxydehydroaustin, forming precalidodehydroaustin. Finally, the iron/alpha-ketoglutarate-dependent dioxygenase converts precalidodehydroaustin into calidodehydroaustin. This is Polyprenyl transferase ausN from Aspergillus calidoustus.